Reading from the N-terminus, the 663-residue chain is Cyclic nucleotide-gated channel alpha-2 (663 aa).

The interval 1–61 is disordered; that stretch reads MTEKANGVKS…QLAEMDAPQQ (61 aa). Over 1–144 the chain is Cytoplasmic; that stretch reads MTEKANGVKS…PAGDWYYRWL (144 aa). Positions 12–23 are enriched in low complexity; the sequence is PANNHNHHAPPA. A helical membrane pass occupies residues 145–166; that stretch reads FLIALPVLYNWCLLVARACFSD. The Extracellular segment spans residues 167-176; it reads LQKGYYIVWL. A helical transmembrane segment spans residues 177-197; it reads VLDYVSDVVYIADLFIRLRTG. Over 198–222 the chain is Cytoplasmic; the sequence is FLEQGLLVKDTKKLRDNYIHTMQFK. The helical transmembrane segment at 223 to 241 threads the bilayer; that stretch reads LDVASIIPTDLIYFAVGIH. The Extracellular portion of the chain corresponds to 242–246; it reads NPEVR. A helical membrane pass occupies residues 247–265; it reads FNRLLHFARMFEFFDRTET. The Cytoplasmic segment spans residues 266-272; it reads RTSYPNI. An ion conduction pathway region spans residues 270-378; the sequence is PNIFRISNLI…GNVGSMISNM (109 aa). Residues 273–296 traverse the membrane as a helical segment; sequence FRISNLILYILIIIHWNACIYYAI. Topologically, residues 297-319 are extracellular; sequence SKSIGFGVDTWVYPNITDPEYGY. 2 consecutive transmembrane segments (helical) span residues 320–354 and 355–379; these read LSRE…LFVI and FDFL…SNMN. Residues 337–340 are selectivity filter; that stretch reads TIGE. Residues 380–456 form a C-linker region; that stretch reads ATRAEFQAKI…STLKKVRIFQ (77 aa). At 380-663 the chain is on the cytoplasmic side; that stretch reads ATRAEFQAKI…NSPEPPAEKP (284 aa). Residues 460–580 form a cyclic nucleotide-binding domain region; it reads AGLLVELVLK…EERGREILMK (121 aa). 4 residues coordinate 3',5'-cyclic GMP: glycine 520, serine 523, arginine 536, and threonine 537. Positions 536 and 537 each coordinate 3',5'-cyclic AMP. Positions 597–651 form a coiled coil; that stretch reads VQEKLEQLETNMDTLYTRFARLLAEYTGAQQKLKQRITVLETKMKQNNEDDSLSD. Residues 640–663 are disordered; that stretch reads MKQNNEDDSLSDGMNSPEPPAEKP.

This sequence belongs to the cyclic nucleotide-gated cation channel (TC 1.A.1.5) family. CNGA2 subfamily. The olfactory cyclic nucleotide-gated channel is an heterotetramer composed of CNGA2, CNGA4 and CNGB1b subunits with 2:1:1 stoichiometry. As to expression, olfactory neurons.

The protein resides in the cell projection. Its subcellular location is the cilium membrane. It catalyses the reaction Ca(2+)(in) = Ca(2+)(out). It carries out the reaction Na(+)(in) = Na(+)(out). The catalysed reaction is K(+)(in) = K(+)(out). The enzyme catalyses NH4(+)(in) = NH4(+)(out). It catalyses the reaction Rb(+)(in) = Rb(+)(out). It carries out the reaction Li(+)(in) = Li(+)(out). The catalysed reaction is Cs(+)(in) = Cs(+)(out). Its function is as follows. Pore-forming subunit of the olfactory cyclic nucleotide-gated channel. Operates in the cilia of olfactory sensory neurons where chemical stimulation of the odorant is converted to an electrical signal. Mediates odorant-induced cAMP-dependent Ca(2+) influx triggering neuron depolarization. The rise of intracellular Ca(2+) levels potentiates the olfactory response by activating Ca(2+)-dependent Cl(-) channels, but it also serves as a negative feedback signal to desensitize the channel for rapid adaptation to odorants. Conducts cAMP- and cGMP-gated ion currents, with permeability for monovalent and divalent cations. The protein is Cyclic nucleotide-gated channel alpha-2 of Bos taurus (Bovine).